The sequence spans 253 residues: Small ribosomal subunit protein uS3 (253 aa).

A KH type-2 domain is found at 21–92 (LNEFLTRELA…SVELYAEKVA (72 aa)). Positions 211–253 (VEPKDEILPTTPISEQKGGKPDPQVPQQPPQQPPAMPPPVPTA) are disordered. The span at 233–253 (PQVPQQPPQQPPAMPPPVPTA) shows a compositional bias: pro residues.

The protein belongs to the universal ribosomal protein uS3 family.

Its subcellular location is the cytoplasm. It localises to the nucleus. The protein resides in the nucleolus. It is found in the mitochondrion inner membrane. The protein localises to the cytoskeleton. Its subcellular location is the spindle. The catalysed reaction is 2'-deoxyribonucleotide-(2'-deoxyribose 5'-phosphate)-2'-deoxyribonucleotide-DNA = a 3'-end 2'-deoxyribonucleotide-(2,3-dehydro-2,3-deoxyribose 5'-phosphate)-DNA + a 5'-end 5'-phospho-2'-deoxyribonucleoside-DNA + H(+). Functionally, component of the small ribosomal subunit. The ribosome is a large ribonucleoprotein complex responsible for the synthesis of proteins in the cell. Has endonuclease activity and plays a role in repair of damaged DNA. Also involved in other processes including regulation of transcription, translation of its cognate mRNA, spindle formation and chromosome movement during mitosis, and apoptosis. In Ambystoma mexicanum (Axolotl), this protein is Small ribosomal subunit protein uS3 (RPS3).